The following is a 613-amino-acid chain: Protein starmaker (613 aa).

Positions 1 to 20 (MLSRTVFVPLILAFVGVSIS) are cleaved as a signal peptide. The disordered stretch occupies residues 42–613 (FTVQFNVGTP…DGRKTSMPIS (572 aa)). Composition is skewed to basic and acidic residues over residues 62-72 (DGKDSAEKNEA), 117-132 (SAEKRGEADGAPDKPD), 147-193 (DASH…KPEG), 206-284 (SAEK…KSDD), and 291-449 (DEQK…HSDS). A compositionally biased stretch (acidic residues) spans 450–465 (DSDSDSDSDSDSDSDS). 3 stretches are compositionally biased toward basic and acidic residues: residues 467–482 (SNSRDKDEKKDKSSES), 509–521 (DKDSSVEKDKTDS), and 538–554 (DDSKDATPSSEDHTAEK). The span at 555–573 (TDEDSHDVSDDDDDIDAHD) shows a compositional bias: acidic residues. The span at 574–607 (DEAGVEHGTDEASKPHQEPDHHDDTTHGSDDGRK) shows a compositional bias: basic and acidic residues.

It is found in the secreted. Its function is as follows. Essential for the formation of otoliths in the inner ear of developing larvae and for the perception of gravity and acceleration. May be one of the organic components of the ortholiths. This Danio rerio (Zebrafish) protein is Protein starmaker (stm).